A 249-amino-acid chain; its full sequence is Vitamin B12 import ATP-binding protein BtuD (249 aa).

The ABC transporter domain occupies 5-233 (MQLQDVAETT…PNLAQAYGMN (229 aa)). 33 to 40 (GPNGAGKS) is an ATP binding site.

Belongs to the ABC transporter superfamily. Vitamin B12 importer (TC 3.A.1.13.1) family. As to quaternary structure, the complex is composed of two ATP-binding proteins (BtuD), two transmembrane proteins (BtuC) and a solute-binding protein (BtuF).

The protein localises to the cell inner membrane. The catalysed reaction is an R-cob(III)alamin(out) + ATP + H2O = an R-cob(III)alamin(in) + ADP + phosphate + H(+). In terms of biological role, part of the ABC transporter complex BtuCDF involved in vitamin B12 import. Responsible for energy coupling to the transport system. The polypeptide is Vitamin B12 import ATP-binding protein BtuD (Citrobacter koseri (strain ATCC BAA-895 / CDC 4225-83 / SGSC4696)).